Consider the following 180-residue polypeptide: dCTP deaminase, dUMP-forming (180 aa).

Residues 100–105, Asp-117, 125–127, Gln-146, Tyr-160, and Gln-167 contribute to the dCTP site; these read RSSLGR and TLE. The Proton donor/acceptor role is filled by Glu-127.

Belongs to the dCTP deaminase family. In terms of assembly, homotrimer.

It catalyses the reaction dCTP + 2 H2O = dUMP + NH4(+) + diphosphate. Its pathway is pyrimidine metabolism; dUMP biosynthesis; dUMP from dCTP: step 1/1. In terms of biological role, bifunctional enzyme that catalyzes both the deamination of dCTP to dUTP and the hydrolysis of dUTP to dUMP without releasing the toxic dUTP intermediate. This is dCTP deaminase, dUMP-forming from Persephonella marina (strain DSM 14350 / EX-H1).